A 282-amino-acid chain; its full sequence is Elongation factor Ts (282 aa).

Residues 80–83 (TDFV) form an involved in Mg(2+) ion dislocation from EF-Tu region.

This sequence belongs to the EF-Ts family.

It localises to the cytoplasm. In terms of biological role, associates with the EF-Tu.GDP complex and induces the exchange of GDP to GTP. It remains bound to the aminoacyl-tRNA.EF-Tu.GTP complex up to the GTP hydrolysis stage on the ribosome. The sequence is that of Elongation factor Ts (tsf) from Chlamydia trachomatis serovar D (strain ATCC VR-885 / DSM 19411 / UW-3/Cx).